The chain runs to 458 residues: Monomethylamine methyltransferase MtmB1 (458 aa).

O202 is a non-standard amino acid (pyrrolysine).

The protein belongs to the monomethylamine methyltransferase family.

It carries out the reaction Co(I)-[methylamine-specific corrinoid protein] + methylamine + H(+) = methyl-Co(III)-[methylamine-specific corrinoid protein] + NH4(+). It participates in one-carbon metabolism; methanogenesis from methylamine. Its function is as follows. Catalyzes the transfer of the methyl group from monomethylamine to the corrinoid cofactor of MtmC. In Methanosarcina barkeri (strain Fusaro / DSM 804), this protein is Monomethylamine methyltransferase MtmB1 (mtmB1).